Here is a 57-residue protein sequence, read N- to C-terminus: Insulin (57 aa).

Cystine bridges form between C12–C43, C24–C56, and C42–C47.

The protein belongs to the insulin family. As to quaternary structure, heterodimer of a B chain and an A chain linked by two disulfide bonds.

Its subcellular location is the secreted. Its function is as follows. Insulin decreases blood glucose concentration. It increases cell permeability to monosaccharides, amino acids and fatty acids. It accelerates glycolysis, the pentose phosphate cycle, and glycogen synthesis in liver. This is Insulin (ins) from Lampetra fluviatilis (European river lamprey).